Consider the following 375-residue polypeptide: uncharacterized protein (375 aa).

7 helical membrane passes run 21–41 (LLLL…IVLF), 66–86 (IIVF…FCVS), 160–180 (LVGV…PGIV), 203–223 (LVGL…HLLI), 234–254 (FYMV…FHLF), 289–309 (VISF…YFLI), and 338–358 (FFLM…MLFF).

The protein resides in the cell membrane. This is an uncharacterized protein from Mycoplasma genitalium (strain ATCC 33530 / DSM 19775 / NCTC 10195 / G37) (Mycoplasmoides genitalium).